Here is a 474-residue protein sequence, read N- to C-terminus: E3 ubiquitin-protein ligase rnf168 (474 aa).

Residues 1–12 (MPPVSEVDRGPV) are compositionally biased toward basic and acidic residues. The disordered stretch occupies residues 1-20 (MPPVSEVDRGPVEESSGGLK). Residues 26–65 (CPVCLEIFLEPVTLPCMHTFCKPCFLETVDKSNMCCPLCR) form an RING-type zinc finger. The LR motif 1 signature appears at 119-137 (VCQPGELRKEYEDQISKLV). The short motif at 152-160 (EEYIQRLLA) is the UMI motif element. The MIU motif 1 signature appears at 174–195 (EEQQLENDEKLARLLSLELNSG). A compositionally biased stretch (polar residues) spans 192–203 (LNSGPASESTCN). Disordered stretches follow at residues 192–259 (LNSG…KPLS) and 367–474 (IQKE…NMGS). Positions 233–243 (PSSSDSSPDSS) are enriched in low complexity. Positions 353-376 (RWQQEEEDRRLALRIQKELDRENS) match the MIU motif 2 motif. The span at 367-383 (IQKELDRENSVDRRKGS) shows a compositional bias: basic and acidic residues. Positions 379 to 390 (RRKGSADSYQLR) match the LR motif 2 motif. Composition is skewed to polar residues over residues 385–402 (DSYQ…TTSP) and 409–418 (KGSNTTTAKN). Basic and acidic residues predominate over residues 422–432 (RRGEEKTEKRL). The segment covering 443-457 (VKTPVSSTAVSSTVK) has biased composition (low complexity).

Belongs to the RNF168 family. In terms of assembly, monomer.

It is found in the nucleus. The enzyme catalyses S-ubiquitinyl-[E2 ubiquitin-conjugating enzyme]-L-cysteine + [acceptor protein]-L-lysine = [E2 ubiquitin-conjugating enzyme]-L-cysteine + N(6)-ubiquitinyl-[acceptor protein]-L-lysine.. It functions in the pathway protein modification; protein ubiquitination. Functionally, E3 ubiquitin-protein ligase required for accumulation of repair proteins to sites of DNA damage. Acts with ube2n/ubc13 to amplify the rnf8-dependent histone ubiquitination. Recruited to sites of DNA damage at double-strand breaks (DSBs) by binding to ubiquitinated histone H2A and ubiquitinates histone H2A and H2AX, leading to amplify the rnf8-dependent H2A ubiquitination and promoting the formation of 'Lys-63'-linked ubiquitin conjugates. This leads to concentrate ubiquitinated histones H2A and H2AX at DNA lesions. Catalyzes monoubiquitination of 'Lys-13' and 'Lys-15' of nucleosomal histone H2A (H2AK13Ub and H2AK15Ub, respectively). The polypeptide is E3 ubiquitin-protein ligase rnf168 (Danio rerio (Zebrafish)).